A 390-amino-acid chain; its full sequence is cAMP-dependent protein kinase regulatory subunit (390 aa).

Residues 1-17 (MSASGFTSPFGANSNPF) show a composition bias toward polar residues. Positions 1–81 (MSASGFTSPF…RPQNPDGYPA (81 aa)) are disordered. Positions 1–129 (MSASGFTSPF…RLKKAIQGNF (129 aa)) are dimerization and phosphorylation. At Ser90 the chain carries Phosphoserine. 3',5'-cyclic AMP-binding positions include 130–261 (LFSH…EEVP), Glu208, Arg217, 262–383 (ILST…GVEE), Glu329, and Arg338.

This sequence belongs to the cAMP-dependent kinase regulatory chain family. Tetramer, composed of 2 regulatory (R) and 2 catalytic (C) subunits. In the presence of cAMP it dissociates into 2 active monomeric C subunits and an R dimer.

This chain is cAMP-dependent protein kinase regulatory subunit (SUM1), found in Pyricularia oryzae (strain 70-15 / ATCC MYA-4617 / FGSC 8958) (Rice blast fungus).